The primary structure comprises 479 residues: uncharacterized protein (479 aa).

10 helical membrane-spanning segments follow: residues 11–31 (ILMAIPLITFLLPAPDGLSLI), 43–63 (IVGLVLKPYGEPVILLAAIAV), 90–110 (GTTWLIFTAFTLSSAFVITGL), 151–171 (SGGIIFPIINSVVVALGSDPE), 195–215 (IFLTAMAPNALALSLMAPILG), 223–243 (WFLAASVPGLLCLFLIPLICY), 274–294 (KALSVLFVIALFGWIFSNSLH), 295–315 (INATIVAIIVMVLCIVLSIVT), 328–348 (TLVWYGGIIGMSGLLEKSGFF), and 447–467 (WWITGAIIAFGSLIIHLTIGM).

It belongs to the SLC13A/DASS transporter (TC 2.A.47) family. DIT1 subfamily.

It is found in the cell inner membrane. This is an uncharacterized protein from Haemophilus influenzae (strain ATCC 51907 / DSM 11121 / KW20 / Rd).